The following is a 460-amino-acid chain: Tyrosine-protein phosphatase non-receptor type 18 (460 aa).

One can recognise a Tyrosine-protein phosphatase domain in the interval 26-291 (LAGEFSDIQA…RFLYHTVAQM (266 aa)). Residues Asp-197, 229–235 (CSAGCGR), and Gln-276 each bind substrate. Cys-229 (phosphocysteine intermediate) is an active-site residue. A disordered region spans residues 361–460 (GAPAGAGSGT…RDPPAEWTRV (100 aa)). A compositionally biased stretch (gly residues) spans 364–378 (AGAGSGTQTGTGTGT). Tyr-389 is subject to Phosphotyrosine. At Thr-393 the chain carries Phosphothreonine. Position 426 is a phosphotyrosine (Tyr-426). Residues 449-460 (GPRDPPAEWTRV) show a composition bias toward basic and acidic residues.

It belongs to the protein-tyrosine phosphatase family. Non-receptor class 4 subfamily. In terms of assembly, interacts with PSTPIP1. Expressed in brain, colon and several tumor-derived cell lines.

Its subcellular location is the nucleus. It is found in the cytoplasm. It catalyses the reaction O-phospho-L-tyrosyl-[protein] + H2O = L-tyrosyl-[protein] + phosphate. Its function is as follows. Differentially dephosphorylate autophosphorylated tyrosine kinases which are known to be overexpressed in tumor tissues. The sequence is that of Tyrosine-protein phosphatase non-receptor type 18 (PTPN18) from Homo sapiens (Human).